We begin with the raw amino-acid sequence, 327 residues long: Glycerol-3-phosphate dehydrogenase [NAD(P)+] (327 aa).

The NADPH site is built by Phe-14, Arg-35, and Lys-108. Residues Lys-108 and Gly-136 each coordinate sn-glycerol 3-phosphate. Ala-140 is an NADPH binding site. Lys-191, Asp-244, Ser-254, Arg-255, and Asn-256 together coordinate sn-glycerol 3-phosphate. The active-site Proton acceptor is Lys-191. Arg-255 is an NADPH binding site. Positions 275 and 277 each coordinate NADPH.

It belongs to the NAD-dependent glycerol-3-phosphate dehydrogenase family.

The protein localises to the cytoplasm. The catalysed reaction is sn-glycerol 3-phosphate + NAD(+) = dihydroxyacetone phosphate + NADH + H(+). It catalyses the reaction sn-glycerol 3-phosphate + NADP(+) = dihydroxyacetone phosphate + NADPH + H(+). Its pathway is membrane lipid metabolism; glycerophospholipid metabolism. Catalyzes the reduction of the glycolytic intermediate dihydroxyacetone phosphate (DHAP) to sn-glycerol 3-phosphate (G3P), the key precursor for phospholipid synthesis. The sequence is that of Glycerol-3-phosphate dehydrogenase [NAD(P)+] from Agrobacterium fabrum (strain C58 / ATCC 33970) (Agrobacterium tumefaciens (strain C58)).